A 396-amino-acid polypeptide reads, in one-letter code: NADH-quinone oxidoreductase subunit D (396 aa).

It belongs to the complex I 49 kDa subunit family. NDH-1 is composed of 14 different subunits. Subunits NuoB, C, D, E, F, and G constitute the peripheral sector of the complex.

It localises to the cell inner membrane. The enzyme catalyses a quinone + NADH + 5 H(+)(in) = a quinol + NAD(+) + 4 H(+)(out). NDH-1 shuttles electrons from NADH, via FMN and iron-sulfur (Fe-S) centers, to quinones in the respiratory chain. The immediate electron acceptor for the enzyme in this species is believed to be ubiquinone. Couples the redox reaction to proton translocation (for every two electrons transferred, four hydrogen ions are translocated across the cytoplasmic membrane), and thus conserves the redox energy in a proton gradient. The chain is NADH-quinone oxidoreductase subunit D from Chelativorans sp. (strain BNC1).